Reading from the N-terminus, the 400-residue chain is Iron(III) enterobactin esterase (400 aa).

Belongs to the Fes family. As to quaternary structure, monomer.

It is found in the cytoplasm. It carries out the reaction Fe(III)-enterobactin + 3 H2O + H(+) = Fe(III)-[N-(2,3-dihydroxybenzoyl)-L-serine] + 2 N-(2,3-dihydroxybenzoyl)-L-serine. The catalysed reaction is Fe(III)-enterobactin + H2O = Fe(III)-[N-(2,3-dihydroxybenzoyl)-L-serine]3 + H(+). It catalyses the reaction Fe(III)-[N-(2,3-dihydroxybenzoyl)-L-serine]3 + H2O + H(+) = Fe(III)-[N-(2,3-dihydroxybenzoyl)-L-serine]2 + N-(2,3-dihydroxybenzoyl)-L-serine. The enzyme catalyses Fe(III)-[N-(2,3-dihydroxybenzoyl)-L-serine]2 + H2O + H(+) = Fe(III)-[N-(2,3-dihydroxybenzoyl)-L-serine] + N-(2,3-dihydroxybenzoyl)-L-serine. It carries out the reaction enterobactin + 3 H2O = 3 N-(2,3-dihydroxybenzoyl)-L-serine + 2 H(+). Inhibited by N-ethylmaleimide. Its function is as follows. Catalyzes the hydrolysis of ferric enterobactin (Fe-Ent). Is responsible for the release of iron from ferric enterobactin. Also catalyzes the hydrolysis of iron-free enterobactin (Ent). Cleavage of ferric enterobactin results in a mixture of three hydrolysis products, 2,3-dihydroxybenzoylserine (DHBS), the linear dimer (DHBS)2 and the linear trimer (DHBS)3, while cleavage of iron-free enterobactin yields only the monomer. Hydrolysis of ferric enterobactin is less efficient than hydrolysis of unliganded enterobactin. It also cleaves the aluminum (III) complex at a rate similar to the ferric complex. This chain is Iron(III) enterobactin esterase, found in Escherichia coli (strain K12).